The chain runs to 342 residues: Platelet-activating factor receptor (342 aa).

Residues 1 to 16 (MEPHDSSHMDSEFRYT) are Extracellular-facing. Residues 17-38 (LFPIVYSIIFVLGVIANGYVLW) traverse the membrane as a helical segment. Topologically, residues 39-54 (VFARLYPCKKFNEIKI) are cytoplasmic. The helical transmembrane segment at 55-74 (FMVNLTMADMLFLITLPLWI) threads the bilayer. The Extracellular segment spans residues 75 to 91 (VYYQNQGNWILPKFLCN). Cys-90 and Cys-173 are joined by a disulfide. A helical membrane pass occupies residues 92–113 (VAGCLFFINTYCSVAFLGVITY). Over 114-133 (NRFQAVTRPIKTAQANTRKR) the chain is Cytoplasmic. The chain crosses the membrane as a helical span at residues 134-155 (GISLSLVIWVAIVGAASYFLIL). Over 156–184 (DSTNTVPDSAGSGNVTRCFEHYEKGSVPV) the chain is Extracellular. N-linked (GlcNAc...) asparagine glycosylation occurs at Asn-169. A helical transmembrane segment spans residues 185–205 (LIIHIFIVFSFFLVFLIILFC). Topologically, residues 206–233 (NLVIIRTLLMQPVQQQRNAEVKRRALWM) are cytoplasmic. A helical transmembrane segment spans residues 234 to 254 (VCTVLAVFIICFVPHHVVQLP). Residues 255–276 (WTLAELGFQDSKFHQAINDAHQ) are Extracellular-facing. Residues 277-296 (VTLCLLSTNCVLDPVIYCFL) form a helical membrane-spanning segment. Residues 297 to 342 (TKKFRKHLTEKFYSMRSSRKCSRATTDTVTEVVVPFNQIPGNSLKN) are Cytoplasmic-facing.

Belongs to the G-protein coupled receptor 1 family. In terms of assembly, interacts with ARRB1. As to expression, expressed in the placenta, lung, left and right heart ventricles, heart atrium, leukocytes and differentiated HL-60 granulocytes.

The protein localises to the cell membrane. In terms of biological role, receptor for platelet activating factor, a chemotactic phospholipid mediator that possesses potent inflammatory, smooth-muscle contractile and hypotensive activity. Seems to mediate its action via a G protein that activates a phosphatidylinositol-calcium second messenger system. This Homo sapiens (Human) protein is Platelet-activating factor receptor (PTAFR).